The following is a 949-amino-acid chain: Syndetin (949 aa).

The disordered stretch occupies residues 1-28; that stretch reads MQKIKSLMTRQGLRSPQESVHDLSPIEN. Residues 8-18 show a composition bias toward polar residues; the sequence is MTRQGLRSPQE. Coiled-coil stretches lie at residues 82–104 and 198–226; these read SLQE…LERV and YSCI…LSKI. A disordered region spans residues 509–581; sequence FEIQADSKDD…ETLRSRKKSD (73 aa). Residues 569 to 581 are compositionally biased toward basic and acidic residues; that stretch reads VSRETLRSRKKSD.

It belongs to the syndetin family. As to quaternary structure, component of the endosome-associated retrograde protein (EARP) complex.

The protein localises to the recycling endosome. Its subcellular location is the membrane. Functionally, acts as a component of the EARP complex that is involved in endocytic recycling. The EARP complex associates with Rab4-positive endosomes and promotes recycling of internalized transferrin receptor (TFRC) to the plasma membrane. In Gallus gallus (Chicken), this protein is Syndetin.